The sequence spans 466 residues: Cysteine--tRNA ligase (466 aa).

Cys28 provides a ligand contact to Zn(2+). Residues 30-40 (PTVYNYIHIGN) carry the 'HIGH' region motif. The Zn(2+) site is built by Cys208, His233, and Glu237. The short motif at 265–269 (KMSKS) is the 'KMSKS' region element. Position 268 (Lys268) interacts with ATP.

It belongs to the class-I aminoacyl-tRNA synthetase family. In terms of assembly, monomer. Zn(2+) is required as a cofactor.

The protein resides in the cytoplasm. It catalyses the reaction tRNA(Cys) + L-cysteine + ATP = L-cysteinyl-tRNA(Cys) + AMP + diphosphate. The polypeptide is Cysteine--tRNA ligase (Staphylococcus haemolyticus (strain JCSC1435)).